Here is a 619-residue protein sequence, read N- to C-terminus: MALVSVAPLVSMRRSLFSSPYELKSIDKTIPNLVMCRKRMSGTPSIRVSSTTSASNDDGVRRRVGDYRYNHWDDDLIDSLATSYEAPSYLERADTLVEAIKDRFNSMGVEDGERISPLTDLYQRLWMVDSVERLGIDRHFQNEIKSALDYVFSYWKEKGIGRGRQSAVTDLNSTALGFRTLRLHGYPVSSDVLENFKDHNGQFTCSGIQTEGEIRGVLNLFRASLIAFPGEKVMEEAEIFSTMYLKHALQKIAVSSLSQEIEYLLDYGWHTNLPRLEARMYMDVFPQDTIYEQKLVELAKVEFNIFHSLQKRELQSLTRWWKHYGFPQLSFTRHIHVEYYTFASCVATDPKQSAFRLGFAKMSHFVTVLDDIYDTYGTMEELELFTAAIKRWDPSLVDCLPEYMKGVYMAVYDTVNEMAKEAEKVQGRDTLNYVRQAWEPYFDAYMIEAKWISSGYLPTFQEYLDNSKISFGSRITILQPILTLGEPLPHEILQEIDFPSKFNDLISVLLRLKGDTRCYKADRARGEEASSVSCYMKDNAGLTEEDAIHRINAMVHNLLKELNWELLKPDCNVPISCKKAAFDICRIFHHGYKYRDGYGDATIETKNLVKRTVLEPVPL.

A chloroplast-targeting transit peptide spans 1 to 47; the sequence is MALVSVAPLVSMRRSLFSSPYELKSIDKTIPNLVMCRKRMSGTPSIR. Residues Asp-370, Asp-374, and Asp-522 each contribute to the Mg(2+) site. The DDXXD motif signature appears at 370-374; sequence DDIYD.

It belongs to the terpene synthase family. Tpsd subfamily. The cofactor is Mg(2+). Mn(2+) is required as a cofactor.

Its subcellular location is the plastid. It localises to the chloroplast. The enzyme catalyses (2E)-geranyl diphosphate = (1S,4R)-camphene + diphosphate. The catalysed reaction is (2E)-geranyl diphosphate = (1R,5R)-alpha-pinene + diphosphate. It carries out the reaction (2E)-geranyl diphosphate = tricyclene + diphosphate. It catalyses the reaction (2E)-geranyl diphosphate = beta-myrcene + diphosphate. The enzyme catalyses (2E)-geranyl diphosphate = (1S,5S)-beta-pinene + diphosphate. The catalysed reaction is (2E)-geranyl diphosphate = (1S,5S)-alpha-pinene + diphosphate. Its pathway is terpene metabolism; oleoresin biosynthesis. It participates in secondary metabolite biosynthesis; terpenoid biosynthesis. Monoterpene synthase (TPS) involved in the biosynthesis of monoterpene natural products included in conifer oleoresin secretions and volatile emissions; these compounds contribute to biotic and abiotic stress defense against herbivores and pathogens. Catalyzes the conversion of (2E)-geranyl diphosphate (GPP) to (-)-camphene, (+)-alpha-pinene and (-)-alpha-pinene, and, to a lower extent, to tricyclene, myrcene and (-)-beta-pinene. This is (-)-camphene synthase, chloroplastic from Pinus contorta (Shore pine).